Here is a 348-residue protein sequence, read N- to C-terminus: uncharacterized protein (348 aa).

WD repeat units lie at residues Gly59–Ser98, Gly142–Thr182, Asp185–Thr226, Gln229–Ser267, Gly270–Thr309, and Gly312–Ala347.

This is an uncharacterized protein from Synechocystis sp. (strain ATCC 27184 / PCC 6803 / Kazusa).